We begin with the raw amino-acid sequence, 196 residues long: Probable nicotinate-nucleotide adenylyltransferase (196 aa).

Belongs to the NadD family.

The catalysed reaction is nicotinate beta-D-ribonucleotide + ATP + H(+) = deamido-NAD(+) + diphosphate. Its pathway is cofactor biosynthesis; NAD(+) biosynthesis; deamido-NAD(+) from nicotinate D-ribonucleotide: step 1/1. In terms of biological role, catalyzes the reversible adenylation of nicotinate mononucleotide (NaMN) to nicotinic acid adenine dinucleotide (NaAD). The chain is Probable nicotinate-nucleotide adenylyltransferase from Caldicellulosiruptor bescii (strain ATCC BAA-1888 / DSM 6725 / KCTC 15123 / Z-1320) (Anaerocellum thermophilum).